The chain runs to 13041 residues: Nonribosomal peptide synthetase kk1B (13041 aa).

Residues 267 to 663 form an adenylation 1 region; it reads ANRVVDTPQK…GRRDSQIKIR (397 aa). Positions 788 to 864 constitute a Carrier 1 domain; it reads ASLMTEGITL…GLINVMQQSS (77 aa). S825 carries the post-translational modification O-(pantetheine 4'-phosphoryl)serine. The condensation 1 stretch occupies residues 882-1313; sequence SFAQGRLWFL…TPIAHLQLTD (432 aa). An adenylation 2 region spans residues 1341-1736; sequence FQKQVAACPN…GRMDFQIKIR (396 aa). A Carrier 2 domain is found at 1865 to 1939; the sequence is AARNEIEAVL…NLAATIKRGS (75 aa). S1899 bears the O-(pantetheine 4'-phosphoryl)serine mark. The interval 1957–2383 is condensation 2; it reads SFAQGRLWFL…DQPQTPLALL (427 aa). The adenylation 3 stretch occupies residues 2418–2812; that stretch reads QVAASPNATA…GRMDQQIKIR (395 aa). The tract at residues 2891-3023 is methyltransferase (M) domain 1; that stretch reads VGNDFMGWTS…EYLSKVLYAL (133 aa). Residues 3353–3427 enclose the Carrier 3 domain; it reads GARNETEAVL…DLAASIRRGS (75 aa). S3387 bears the O-(pantetheine 4'-phosphoryl)serine mark. A condensation 3 region spans residues 3445–3869; that stretch reads SFAQGRLWFL…DQPQIPIAVL (425 aa). Positions 3901–4300 are adenylation 4; the sequence is FRAQVVACPD…GRMDQQVKIR (400 aa). Residues 4412-4486 enclose the Carrier 4 domain; sequence PPRNEIETIL…NLAAAVQRGS (75 aa). S4446 carries the O-(pantetheine 4'-phosphoryl)serine modification. A condensation 4 region spans residues 4504 to 4935; the sequence is SFAQGRLWFL…TPIAALSLTD (432 aa). The segment at 4963–5362 is adenylation 5; the sequence is FREQVATYPD…GRMDRQLKIR (400 aa). The tract at residues 5430–5567 is methyltransferase (M) domain 2; sequence TYAELDTLVK…VAQYFPTPEY (138 aa). The Carrier 5 domain maps to 5897-5971; it reads QPRNEVEAVL…DLAAAIQRGS (75 aa). S5931 is modified (O-(pantetheine 4'-phosphoryl)serine). The tract at residues 5989 to 6416 is condensation 5; that stretch reads SYAQGRLWFL…DQPQTPLALL (428 aa). Residues 6451-6845 are adenylation 6; sequence QVAASPNATA…GRMDQQIKIR (395 aa). Residues 6924-7056 are methyltransferase (M) domain 3; sequence VGNDFMGWTS…EYLSKVLYAL (133 aa). The 75-residue stretch at 7386-7460 folds into the Carrier 6 domain; sequence GARNEIEAAL…DLAGAVQRGS (75 aa). Residue S7420 is modified to O-(pantetheine 4'-phosphoryl)serine. The interval 7478-7901 is condensation 6; the sequence is SFAQGRLWFL…GLETPRLPIS (424 aa). Residues 7934 to 8335 are adenylation 7; it reads FRTQVAASPD…GRMDRQLKIR (402 aa). Positions 8404-8540 are methyltransferase (M) domain 4; sequence YAEIEEIDSS…AQYFPSPEYL (137 aa). Residues 8871–8945 form the Carrier 7 domain; the sequence is GPRNEIEALL…DLAASIQRGS (75 aa). An O-(pantetheine 4'-phosphoryl)serine modification is found at S8905. The segment at 8963-9392 is condensation 7; it reads SFAQGRLWFL…PKTPIAVLPL (430 aa). The adenylation 8 stretch occupies residues 9422–9822; the sequence is FRQQVAARPD…SRMDQQVKIR (401 aa). The Carrier 8 domain maps to 9943 to 10017; it reads PPTNDMERIL…DLASTIKQDS (75 aa). S9977 carries the O-(pantetheine 4'-phosphoryl)serine modification. The interval 10035-10462 is condensation 8; sequence SFAQGRLWFL…ETPQTPLAVL (428 aa). An adenylation 9 region spans residues 10494–10892; that stretch reads FRAQVAACPD…GRMDQQIKIR (399 aa). Residues 10959-11105 are methyltransferase (M) domain 5; it reads IYAEIEEIDS…EYLADVVGAL (147 aa). A Carrier 9 domain is found at 11428–11502; that stretch reads SARNEVEAVL…DLAASIERNS (75 aa). S11462 is modified (O-(pantetheine 4'-phosphoryl)serine). Residues 11520 to 11945 are condensation 9; the sequence is SFAQGRLWFL…EQPQTPIAVL (426 aa). Residues 11977-12377 are adenylation 10; the sequence is FRDQVAANPR…GRMDQQIKIR (401 aa). The Carrier 10 domain maps to 12495-12569; it reads VPRNELEASL…DLALKVSSYI (75 aa). S12529 carries the O-(pantetheine 4'-phosphoryl)serine modification. The condensation 10 stretch occupies residues 12647–13032; the sequence is FPANADCDKI…RMHEEFCDII (386 aa).

Belongs to the NRP synthetase family.

It participates in secondary metabolite biosynthesis. Nonribosomal peptide synthetase; part of the gene cluster that mediates the biosynthesis of KK-1, a novel cyclic depsipeptide with 10 residues which is a promising active compound with high activity against many plant pathogens, especially Botrytis cinerea. The nonribosomal peptide synthetase (NRPS) kk1B catalyzes the elongation and cyclization of the decapeptide chain composed of 1 D-lactic acid residue (D-Lac), 1 pipecolic acid residue (Pip), 1 aspartic acid residue (Asp), 1 isoleucine residue (Ile), 1 glycine residue (Gly), 1 tyrosine residue (Tyr) and 4 valine residues (Val). The Asp, Ile and 3 Val residues are N-methylated by the 5 methyltransferase domains from the NRPS (found in modules 3, 5, 6, 7 and 9), whereas the Tyr residue is O-methylated by the cluster encoded O-methyltransferase kk1A. Cyclization with the hydroxy group of the D-lactic acid as a nucleophile is presumed to occur in the final module of NRPS, resulting in the formation of the depsipeptide ester bond through macrocyclization by the C-terminal C domain. The thioesterase kk1J is likely to be involved in the corrective mechanism of peptide chain synthesis. The D-lactate dehydrogenase kk1H is involved in the synthesis of D-lactic acid from pyruvic acid, which is recognized by the A domain of the first kk1B module. The pyrroline-5-carboxylate reductase kk1I is involved in the synthesis of the L-pipecolic acid residue of KK-1 from delta-1-pyrroline-5-carboxylate (P5C), a metabolic intermediate of lysine. It is still unclear how kk1C and kk1D are involved in the production of KK-1. This Curvularia clavata protein is Nonribosomal peptide synthetase kk1B.